The following is a 316-amino-acid chain: 4-hydroxy-3-methylbut-2-enyl diphosphate reductase (316 aa).

Residue Cys-12 coordinates [4Fe-4S] cluster. Positions 41 and 74 each coordinate (2E)-4-hydroxy-3-methylbut-2-enyl diphosphate. Residues His-41 and His-74 each coordinate dimethylallyl diphosphate. Isopentenyl diphosphate-binding residues include His-41 and His-74. Residue Cys-96 coordinates [4Fe-4S] cluster. His-124 contributes to the (2E)-4-hydroxy-3-methylbut-2-enyl diphosphate binding site. His-124 provides a ligand contact to dimethylallyl diphosphate. His-124 is an isopentenyl diphosphate binding site. The Proton donor role is filled by Glu-126. Residue Thr-169 coordinates (2E)-4-hydroxy-3-methylbut-2-enyl diphosphate. Cys-199 is a [4Fe-4S] cluster binding site. (2E)-4-hydroxy-3-methylbut-2-enyl diphosphate contacts are provided by Ser-227, Ser-228, Asn-229, and Ser-271. 4 residues coordinate dimethylallyl diphosphate: Ser-227, Ser-228, Asn-229, and Ser-271. Ser-227, Ser-228, Asn-229, and Ser-271 together coordinate isopentenyl diphosphate.

It belongs to the IspH family. [4Fe-4S] cluster is required as a cofactor.

It carries out the reaction isopentenyl diphosphate + 2 oxidized [2Fe-2S]-[ferredoxin] + H2O = (2E)-4-hydroxy-3-methylbut-2-enyl diphosphate + 2 reduced [2Fe-2S]-[ferredoxin] + 2 H(+). The catalysed reaction is dimethylallyl diphosphate + 2 oxidized [2Fe-2S]-[ferredoxin] + H2O = (2E)-4-hydroxy-3-methylbut-2-enyl diphosphate + 2 reduced [2Fe-2S]-[ferredoxin] + 2 H(+). Its pathway is isoprenoid biosynthesis; dimethylallyl diphosphate biosynthesis; dimethylallyl diphosphate from (2E)-4-hydroxy-3-methylbutenyl diphosphate: step 1/1. It functions in the pathway isoprenoid biosynthesis; isopentenyl diphosphate biosynthesis via DXP pathway; isopentenyl diphosphate from 1-deoxy-D-xylulose 5-phosphate: step 6/6. In terms of biological role, catalyzes the conversion of 1-hydroxy-2-methyl-2-(E)-butenyl 4-diphosphate (HMBPP) into a mixture of isopentenyl diphosphate (IPP) and dimethylallyl diphosphate (DMAPP). Acts in the terminal step of the DOXP/MEP pathway for isoprenoid precursor biosynthesis. The sequence is that of 4-hydroxy-3-methylbut-2-enyl diphosphate reductase from Xylella fastidiosa (strain M23).